We begin with the raw amino-acid sequence, 741 residues long: NUT family member 2G (741 aa).

Disordered stretches follow at residues 172-200 (PGNA…PDDS), 293-375 (IQKS…PEEI), 391-424 (LGSH…SDPG), 496-624 (RAAP…LPGM), and 638-741 (RLSQ…HCSQ). Over residues 304–321 (SLPPPAPPRLEPRGPPAP) the composition is skewed to pro residues. Over residues 402 to 412 (EGQREKGKVEQ) the composition is skewed to basic and acidic residues. The span at 528–545 (QRVSVETSPPQTAAQDPQ) shows a compositional bias: polar residues. The segment covering 639 to 650 (LSQSPVPSSGLL) has biased composition (low complexity). The segment covering 731–741 (SRRKKKRHCSQ) has biased composition (basic residues).

This sequence belongs to the NUT family.

The protein is NUT family member 2G (NUTM2G) of Homo sapiens (Human).